Reading from the N-terminus, the 184-residue chain is MVLMKDEVEVIGFDDAPFNKADKVCILIGTYMRGNRIIDGIYFRKFKKDGMDVTEKIIDIVKEKHYKKIKVIFLAGITFGGFNIADLWEINKETEKPVIVVIDKYPNKEKIFLALKKYFDDADERIKLINSFPEPEKMENIYVQYVGADKEFVKNVIKKTKLKSKIPECLRISHLIGRGFLGLR.

It belongs to the UPF0215 family.

The protein is UPF0215 protein MJ1150 of Methanocaldococcus jannaschii (strain ATCC 43067 / DSM 2661 / JAL-1 / JCM 10045 / NBRC 100440) (Methanococcus jannaschii).